Here is a 615-residue protein sequence, read N- to C-terminus: DNA mismatch repair protein MutL (615 aa).

Positions 362–397 (HFAEPAVREPVAPRYSPAPASGSRPAASWPNAQPGY) are disordered. Residues 373-391 (APRYSPAPASGSRPAASWP) show a composition bias toward low complexity.

Belongs to the DNA mismatch repair MutL/HexB family.

Its function is as follows. This protein is involved in the repair of mismatches in DNA. It is required for dam-dependent methyl-directed DNA mismatch repair. May act as a 'molecular matchmaker', a protein that promotes the formation of a stable complex between two or more DNA-binding proteins in an ATP-dependent manner without itself being part of a final effector complex. The polypeptide is DNA mismatch repair protein MutL (Escherichia coli O45:K1 (strain S88 / ExPEC)).